Here is a 393-residue protein sequence, read N- to C-terminus: NAD(P)H-quinone oxidoreductase subunit H, chloroplastic (393 aa).

This sequence belongs to the complex I 49 kDa subunit family. NDH is composed of at least 16 different subunits, 5 of which are encoded in the nucleus.

Its subcellular location is the plastid. It localises to the chloroplast thylakoid membrane. The enzyme catalyses a plastoquinone + NADH + (n+1) H(+)(in) = a plastoquinol + NAD(+) + n H(+)(out). The catalysed reaction is a plastoquinone + NADPH + (n+1) H(+)(in) = a plastoquinol + NADP(+) + n H(+)(out). Functionally, NDH shuttles electrons from NAD(P)H:plastoquinone, via FMN and iron-sulfur (Fe-S) centers, to quinones in the photosynthetic chain and possibly in a chloroplast respiratory chain. The immediate electron acceptor for the enzyme in this species is believed to be plastoquinone. Couples the redox reaction to proton translocation, and thus conserves the redox energy in a proton gradient. The chain is NAD(P)H-quinone oxidoreductase subunit H, chloroplastic from Ceratophyllum demersum (Rigid hornwort).